The primary structure comprises 210 residues: Leucyl/phenylalanyl-tRNA--protein transferase (210 aa).

The protein belongs to the L/F-transferase family.

The protein localises to the cytoplasm. It catalyses the reaction N-terminal L-lysyl-[protein] + L-leucyl-tRNA(Leu) = N-terminal L-leucyl-L-lysyl-[protein] + tRNA(Leu) + H(+). The catalysed reaction is N-terminal L-arginyl-[protein] + L-leucyl-tRNA(Leu) = N-terminal L-leucyl-L-arginyl-[protein] + tRNA(Leu) + H(+). The enzyme catalyses L-phenylalanyl-tRNA(Phe) + an N-terminal L-alpha-aminoacyl-[protein] = an N-terminal L-phenylalanyl-L-alpha-aminoacyl-[protein] + tRNA(Phe). Functions in the N-end rule pathway of protein degradation where it conjugates Leu, Phe and, less efficiently, Met from aminoacyl-tRNAs to the N-termini of proteins containing an N-terminal arginine or lysine. This Ruegeria sp. (strain TM1040) (Silicibacter sp.) protein is Leucyl/phenylalanyl-tRNA--protein transferase.